Here is a 535-residue protein sequence, read N- to C-terminus: MRLRNGTVATVLVFITTFLSLSWYTAWQNGKEKLIAYQREFHALKERLRIAEHRTLQRSSELNAILEQFRRAVAETNGSKNALNNFSDETLKLLKELTSKKSLQVPNIYYHLPHLLKNEGSLQPSVQVGLGRTGVSIVMGIPTVKRKVKSYLTETLHSLIDKLSPEEKLDCVMVVFIGETDLDYVNNVVASLEKEFSTEINSGLVEVIAPPATYYPDLTNLKETFGDSKERVRWRTKQNLDYCFLMMYAQKKGVYYIQLEDDIVVKQNYFSTIKNFALQLASEDWMILEFSQLGFIGKMFQSPDITLIVEFIFMFYKEKPIDWLLDHILWVKVCNPEKDAKHCDRQKSNLRIRFRPSLFQHVGLHSSLAGKIQKLTDKDFLKPLLHKIHVNPPAEVSTSLKVYQGHTLEKTYVGEDFFWAVTPVAGDYILFKFDKPVNVERYLFHSGNPEHPGDILLNTTVEVLPFQNEELVLSKETKDKRLEDGYFRIGKFENGVAEGTVDPSLNPISSFRLSVIQNSAVWAILNEIHIKKMTN.

Topologically, residues 1-6 (MRLRNG) are cytoplasmic. The chain crosses the membrane as a helical; Signal-anchor for type II membrane protein span at residues 7–27 (TVATVLVFITTFLSLSWYTAW). The stretch at 28–54 (QNGKEKLIAYQREFHALKERLRIAEHR) forms a coiled coil. The Lumenal segment spans residues 28-535 (QNGKEKLIAY…NEIHIKKMTN (508 aa)). 3 N-linked (GlcNAc...) asparagine glycosylation sites follow: asparagine 77, asparagine 85, and asparagine 458.

This sequence belongs to the glycosyltransferase 54 family. The cofactor is a divalent metal cation. N-glycosylated.

It localises to the golgi apparatus membrane. It is found in the secreted. The enzyme catalyses N(4)-{beta-D-GlcNAc-(1-&gt;2)-alpha-D-Man-(1-&gt;3)-[beta-D-GlcNAc-(1-&gt;2)-alpha-D-Man-(1-&gt;6)]-beta-D-Man-(1-&gt;4)-beta-D-GlcNAc-(1-&gt;4)-beta-D-GlcNAc}-L-asparaginyl-[protein] + UDP-N-acetyl-alpha-D-glucosamine = N(4)-{beta-D-GlcNAc-(1-&gt;2)-[beta-D-GlcNAc-(1-&gt;4)]-alpha-D-Man-(1-&gt;3)-[beta-D-GlcNAc-(1-&gt;2)-alpha-D-Man-(1-&gt;6)]-beta-D-Man-(1-&gt;4)-beta-D-GlcNAc-(1-&gt;4)-beta-D-GlcNAc}-L-asparaginyl-[protein] + UDP + H(+). It carries out the reaction an N(4)-{beta-D-GlcNAc-(1-&gt;2)-alpha-D-Man-(1-&gt;3)-[alpha-D-Man-(1-&gt;6)]-beta-D-Man-(1-&gt;4)-beta-D-GlcNAc-(1-&gt;4)-beta-D-GlcNAc}-L-asparaginyl-[protein] + UDP-N-acetyl-alpha-D-glucosamine = an N(4)-{beta-D-GlcNAc-(1-&gt;2)-[beta-D-GlcNAc-(1-&gt;4)]-alpha-D-Man-(1-&gt;3)-[alpha-D-Man-(1-&gt;6)]-beta-D-Man-(1-&gt;4)-beta-D-GlcNAc-(1-&gt;4)-beta-D-GlcNAc}-L-asparaginyl-[protein] + UDP + H(+). The catalysed reaction is an N(4)-{beta-D-GlcNAc-(1-&gt;2)-alpha-D-Man-(1-&gt;3)-[beta-D-GlcNAc-(1-&gt;2)-[beta-D-GlcNAc-(1-&gt;6)]-alpha-D-Man-(1-&gt;6)]-beta-D-Man-(1-&gt;4)-beta-D-GlcNAc-(1-&gt;4)-beta-D-GlcNAc}-L-asparaginyl-[protein] + UDP-N-acetyl-alpha-D-glucosamine = an N(4)-{beta-D-GlcNAc-(1-&gt;2)-[beta-D-GlcNAc-(1-&gt;4)]-alpha-D-Man-(1-&gt;3)-[beta-D-GlcNAc-(1-&gt;2)-[beta-D-GlcNAc-(1-&gt;6)]-alpha-D-Man-(1-&gt;6)]-beta-D-Man-(1-&gt;4)-beta-D-GlcNAc-(1-&gt;4)-beta-D-GlcNAc}-L-asparaginyl-[protein] + UDP + H(+). It catalyses the reaction an N(4)-{beta-D-GlcNAc-(1-&gt;2)-alpha-D-Man-(1-&gt;3)-[beta-D-GlcNAc-(1-&gt;2)-alpha-D-Man-(1-&gt;6)]-beta-D-Man-(1-&gt;4)-beta-D-GlcNAc-(1-&gt;4)-[alpha-L-Fuc-(1-&gt;6)]-beta-D-GlcNAc}-L-asparaginyl-[protein] + UDP-N-acetyl-alpha-D-glucosamine = N(4)-{beta-D-GlcNAc-(1-&gt;2)-[beta-D-GlcNAc-(1-&gt;4)]-alpha-D-Man-(1-&gt;3)-[beta-D-GlcNAc-(1-&gt;2)-alpha-D-Man-(1-&gt;6)]-beta-D-Man-(1-&gt;4)-beta-D-GlcNAc-(1-&gt;4)-[alpha-L-Fuc-(1-&gt;6)]-beta-D-GlcNAc}-asparaginyl-[protein] + UDP + H(+). The enzyme catalyses an N(4)-{beta-D-GlcNAc-(1-&gt;2)-alpha-D-Man-(1-&gt;3)-[beta-D-Gal-(1-&gt;4)-beta-D-GlcNAc-(1-&gt;2)-alpha-D-Man-(1-&gt;6)]-beta-D-Man-(1-&gt;4)-beta-D-GlcNAc-(1-&gt;4)-beta-D-GlcNAc}-L-asparaginyl-[protein] + UDP-N-acetyl-alpha-D-glucosamine = an N(4)-{beta-D-GlcNAc-(1-&gt;2)-[beta-D-GlcNAc-(1-&gt;4)]-alpha-D-Man-(1-&gt;3)-[beta-D-Gal-(1-&gt;4)-beta-D-GlcNAc-(1-&gt;2)-alpha-D-Man-(1-&gt;6)]-beta-D-Man-(1-&gt;4)-beta-D-GlcNAc-(1-&gt;4)-beta-D-GlcNAc}-L-asparaginyl-[protein] + UDP + H(+). It carries out the reaction N(4)-{beta-D-GlcNAc-(1-&gt;2)-alpha-D-Man-(1-&gt;3)-[alpha-D-Man-(1-&gt;3)-{alpha-D-Man-(1-&gt;6)}-alpha-D-Man-(1-&gt;6)]-beta-D-Man-(1-&gt;4)-beta-D-GlcNAc-(1-&gt;4)-beta-D-GlcNAc}-asparaginyl-[protein] + UDP-N-acetyl-alpha-D-glucosamine = N(4)-{beta-D-GlcNAc-(1-&gt;2)-[beta-D-GlcNAc-(1-&gt;4)]-alpha-D-Man-(1-&gt;3)-[alpha-D-Man-(1-&gt;3)-{alpha-D-Man-(1-&gt;6)}-alpha-D-Man-(1-&gt;6)]-beta-D-Man-(1-&gt;4)-beta-D-GlcNAc-(1-&gt;4)-beta-D-GlcNAc}-asparaginyl-[protein] + UDP + H(+). The catalysed reaction is N(4)-{beta-D-GlcNAc-(1-&gt;2)-alpha-D-Man-(1-&gt;3)-beta-D-Man-(1-&gt;4)-beta-D-GlcNAc-(1-&gt;4)-beta-D-GlcNAc}-asparaginyl-[protein] + UDP-N-acetyl-alpha-D-glucosamine = N(4)-{beta-D-GlcNAc-(1-&gt;2)-[beta-D-GlcNAc-(1-&gt;4)]-alpha-D-Man-(1-&gt;3)-beta-D-Man-(1-&gt;4)-beta-D-GlcNAc-(1-&gt;4)-beta-D-GlcNAc}-asparaginyl-[protein] + UDP + H(+). The protein operates within protein modification; protein glycosylation. With respect to regulation, inhibited by UDP. In terms of biological role, glycosyltransferase that catalyze the transfer of GlcNAc from UDP-GlcNAc to the GlcNAcbeta1-2Manalpha1-3 arm of the core structure of N-linked glycans through a beta1-4 linkage and participates in the production of tri- and tetra-antennary N-linked sugar chains. Involved in glucose transport by mediating SLC2A2/GLUT2 glycosylation, thereby controlling cell-surface expression of SLC2A2 in pancreatic beta cells. The sequence is that of Alpha-1,3-mannosyl-glycoprotein 4-beta-N-acetylglucosaminyltransferase A from Gallus gallus (Chicken).